Reading from the N-terminus, the 114-residue chain is Large ribosomal subunit protein uL22 (114 aa).

Belongs to the universal ribosomal protein uL22 family. As to quaternary structure, part of the 50S ribosomal subunit.

This protein binds specifically to 23S rRNA; its binding is stimulated by other ribosomal proteins, e.g. L4, L17, and L20. It is important during the early stages of 50S assembly. It makes multiple contacts with different domains of the 23S rRNA in the assembled 50S subunit and ribosome. Its function is as follows. The globular domain of the protein is located near the polypeptide exit tunnel on the outside of the subunit, while an extended beta-hairpin is found that lines the wall of the exit tunnel in the center of the 70S ribosome. The protein is Large ribosomal subunit protein uL22 of Aeromonas hydrophila subsp. hydrophila (strain ATCC 7966 / DSM 30187 / BCRC 13018 / CCUG 14551 / JCM 1027 / KCTC 2358 / NCIMB 9240 / NCTC 8049).